The sequence spans 207 residues: Peptidyl-tRNA hydrolase (207 aa).

TRNA is bound at residue Y15. Catalysis depends on H20, which acts as the Proton acceptor. F66, N68, and N114 together coordinate tRNA. Residues H187 to G207 form a disordered region. The span at R198–G207 shows a compositional bias: low complexity.

Belongs to the PTH family. In terms of assembly, monomer.

Its subcellular location is the cytoplasm. It catalyses the reaction an N-acyl-L-alpha-aminoacyl-tRNA + H2O = an N-acyl-L-amino acid + a tRNA + H(+). Functionally, hydrolyzes ribosome-free peptidyl-tRNAs (with 1 or more amino acids incorporated), which drop off the ribosome during protein synthesis, or as a result of ribosome stalling. Its function is as follows. Catalyzes the release of premature peptidyl moieties from peptidyl-tRNA molecules trapped in stalled 50S ribosomal subunits, and thus maintains levels of free tRNAs and 50S ribosomes. This is Peptidyl-tRNA hydrolase from Delftia acidovorans (strain DSM 14801 / SPH-1).